Reading from the N-terminus, the 2410-residue chain is Cell wall alpha-1,3-glucan synthase ags1 (2410 aa).

A phosphoserine mark is found at serine 1643, serine 1644, and serine 1651. Threonine 1653 is subject to Phosphothreonine. The disordered stretch occupies residues 1685–1706 (SLSLGSRRGPGHTTEDDASDGL). A phosphoserine mark is found at serine 1738 and serine 1812. Residues 1796 to 1827 (QDDLSDPARSVDSDSVSPPLPPFVAGSNPNAR) form a disordered region. The segment covering 1802 to 1827 (PARSVDSDSVSPPLPPFVAGSNPNAR) has biased composition (low complexity).

This sequence belongs to the glycosyltransferase group 1 family. As to quaternary structure, interacts with sad1.

The catalysed reaction is [(1-&gt;3)-alpha-D-glucosyl](n) + UDP-alpha-D-glucose = [(1-&gt;3)-alpha-D-glucosyl](n+1) + UDP + H(+). Functionally, required for alpha-1,3-glucan and alpha-1,4-glucan production which are required for cell wall synthesis. This chain is Cell wall alpha-1,3-glucan synthase ags1 (ags1), found in Schizosaccharomyces pombe (strain 972 / ATCC 24843) (Fission yeast).